Consider the following 160-residue polypeptide: MSEASRLCSGYYSLNQSFVEPFQCPRRGEGAALQYCCGFADLKYCCSEPGSYFPYKHSYMWSLSIGALIGLGIAALVLLAFVISVCVLCYLFLYTKPQRLDTGLKLQHLEASSTQEGKSNGKTKALNSNAASNATNETYYEADDIIQEKTMDATQIHIAY.

A helical membrane pass occupies residues 65–85 (IGALIGLGIAALVLLAFVISV).

It belongs to the shisa family.

Its subcellular location is the membrane. The protein is Protein shisa-like-2B of Homo sapiens (Human).